Here is a 101-residue protein sequence, read N- to C-terminus: MQRARIKLSSTDHKVLDEICRQIKEIAEKTGVDISGPIPLPTKVLRVVTRKSPDGEGSSTFDRWTMKIHKRLIDIDADERALRHIMKIRIPDNVQIEIQFK.

Belongs to the universal ribosomal protein uS10 family. Part of the 30S ribosomal subunit.

Its function is as follows. Involved in the binding of tRNA to the ribosomes. This Methanocaldococcus jannaschii (strain ATCC 43067 / DSM 2661 / JAL-1 / JCM 10045 / NBRC 100440) (Methanococcus jannaschii) protein is Small ribosomal subunit protein uS10.